A 305-amino-acid chain; its full sequence is D-alanine--D-alanine ligase (305 aa).

The ATP-grasp domain occupies 104 to 300 (RALFASAGIP…FPELVRWMVE (197 aa)). 131–181 (LPRPFVVKPLNEGSSVGVFIVRDNQPSPLPDWPFDADEVLVESFIPGRELT) provides a ligand contact to ATP. Mg(2+) is bound by residues Asp-249, Glu-267, and Asn-269.

This sequence belongs to the D-alanine--D-alanine ligase family. Mg(2+) serves as cofactor. Mn(2+) is required as a cofactor.

It is found in the cytoplasm. It catalyses the reaction 2 D-alanine + ATP = D-alanyl-D-alanine + ADP + phosphate + H(+). It functions in the pathway cell wall biogenesis; peptidoglycan biosynthesis. Its function is as follows. Cell wall formation. In Paramagnetospirillum magneticum (strain ATCC 700264 / AMB-1) (Magnetospirillum magneticum), this protein is D-alanine--D-alanine ligase.